A 152-amino-acid polypeptide reads, in one-letter code: Large ribosomal subunit protein bL9 (152 aa).

Belongs to the bacterial ribosomal protein bL9 family.

Binds to the 23S rRNA. The polypeptide is Large ribosomal subunit protein bL9 (Nostoc sp. (strain PCC 7120 / SAG 25.82 / UTEX 2576)).